Consider the following 359-residue polypeptide: Probable S-adenosylmethionine-dependent methyltransferase At5g38100 (359 aa).

6 residues coordinate S-adenosyl-L-homocysteine: Y19, C63, N68, D104, S133, and F134. The Mg(2+) site is built by N172, D258, and F260.

It belongs to the methyltransferase superfamily. Type-7 methyltransferase family. Homodimer. Requires Mg(2+) as cofactor.

In Arabidopsis thaliana (Mouse-ear cress), this protein is Probable S-adenosylmethionine-dependent methyltransferase At5g38100.